The following is a 591-amino-acid chain: CDK5RAP3 protein homolog (591 aa).

Over residues 232 to 250 (RAGAPSSAKGPASSASAPP) the composition is skewed to low complexity. Disordered regions lie at residues 232–252 (RAGA…PPAL) and 269–303 (TAPP…DAGG). Over residues 279–303 (AGAGASGQGGGIEIDWGDSGGDAGG) the composition is skewed to gly residues. Short sequence motifs (shuffled ATG8-binding motif) lie at residues 311–314 (IDWD), 334–337 (INWD), and 369–372 (IDWD). The span at 386-401 (NNRAGDVAEGEAAASL) shows a compositional bias: low complexity. Residues 386–416 (NNRAGDVAEGEAAASLSGGGGGGASSGDPDD) are disordered.

It belongs to the CDK5RAP3 family. Substrate adapter component of the UFM1 ribosome E3 ligase (UREL) complex. Interacts with ATG8 family proteins.

Substrate adapter of E3 ligase complexes mediating ufmylation, the covalent attachment of the ubiquitin-like modifier UFM1 to substrate proteins, and which is involved in various processes, such as ribosome recycling and reticulophagy (also called ER-phagy). In Chlamydomonas reinhardtii (Chlamydomonas smithii), this protein is CDK5RAP3 protein homolog.